The sequence spans 95 residues: DNA-directed RNA polymerase subunit Rpo11 (95 aa).

This sequence belongs to the archaeal Rpo11/eukaryotic RPB11/RPC19 RNA polymerase subunit family. As to quaternary structure, part of the RNA polymerase complex.

It is found in the cytoplasm. It catalyses the reaction RNA(n) + a ribonucleoside 5'-triphosphate = RNA(n+1) + diphosphate. Functionally, DNA-dependent RNA polymerase (RNAP) catalyzes the transcription of DNA into RNA using the four ribonucleoside triphosphates as substrates. This chain is DNA-directed RNA polymerase subunit Rpo11, found in Thermococcus onnurineus (strain NA1).